The sequence spans 695 residues: Threonine--tRNA ligase (695 aa).

Residues 6–75 (SAIFVNTTDT…ETTATFTAVP (70 aa)) enclose the TGS domain. The tract at residues 274–580 (DHRRLGTELD…LLEHYAGAFP (307 aa)) is catalytic. Positions 379, 430, and 557 each coordinate Zn(2+).

It belongs to the class-II aminoacyl-tRNA synthetase family. Homodimer. It depends on Zn(2+) as a cofactor.

The protein localises to the cytoplasm. It carries out the reaction tRNA(Thr) + L-threonine + ATP = L-threonyl-tRNA(Thr) + AMP + diphosphate + H(+). Catalyzes the attachment of threonine to tRNA(Thr) in a two-step reaction: L-threonine is first activated by ATP to form Thr-AMP and then transferred to the acceptor end of tRNA(Thr). Also edits incorrectly charged L-seryl-tRNA(Thr). The polypeptide is Threonine--tRNA ligase (Corynebacterium glutamicum (strain ATCC 13032 / DSM 20300 / JCM 1318 / BCRC 11384 / CCUG 27702 / LMG 3730 / NBRC 12168 / NCIMB 10025 / NRRL B-2784 / 534)).